A 509-amino-acid polypeptide reads, in one-letter code: Activin receptor type-1 (509 aa).

An N-terminal signal peptide occupies residues methionine 1–serine 20. The Extracellular portion of the chain corresponds to methionine 21–glutamate 123. Asparagine 102 carries N-linked (GlcNAc...) asparagine glycosylation. Residues valine 124–leucine 146 form a helical membrane-spanning segment. Residues arginine 147 to cysteine 509 lie on the Cytoplasmic side of the membrane. The GS domain maps to serine 178–glutamine 207. The region spanning isoleucine 208–leucine 502 is the Protein kinase domain. ATP-binding positions include valine 214–valine 222 and lysine 235. The Proton acceptor role is filled by aspartate 336. Position 501 is a phosphoserine (serine 501).

Belongs to the protein kinase superfamily. TKL Ser/Thr protein kinase family. TGFB receptor subfamily. In terms of assembly, interacts with FKBP1A. Interacts with FCHO1. Interacts with CLU. Interacts with type II receptors AMHR2 and ACVR2A. Interacts with BMP7. Interacts with GDF2/BMP9. Interacts with BMP6 (when glycosylated); the interaction may induce HAMP expression. Interacts with TSC22D1/TSC-22. Mg(2+) is required as a cofactor. The cofactor is Mn(2+). In terms of tissue distribution, urogenital ridge, testis, ovary, brain and lungs.

The protein localises to the membrane. It catalyses the reaction L-threonyl-[receptor-protein] + ATP = O-phospho-L-threonyl-[receptor-protein] + ADP + H(+). It carries out the reaction L-seryl-[receptor-protein] + ATP = O-phospho-L-seryl-[receptor-protein] + ADP + H(+). Its function is as follows. Bone morphogenetic protein (BMP) type I receptor that is involved in a wide variety of biological processes, including bone, heart, cartilage, nervous, and reproductive system development and regulation. As a type I receptor, forms heterotetrameric receptor complexes with the type II receptors AMHR2, ACVR2A ors ACVR2B. Upon binding of ligands such as BMP7 or GDF2/BMP9 to the heteromeric complexes, type II receptors transphosphorylate ACVR1 intracellular domain. In turn, ACVR1 kinase domain is activated and subsequently phosphorylates SMAD1/5/8 proteins that transduce the signal. In addition to its role in mediating BMP pathway-specific signaling, suppresses TGFbeta/activin pathway signaling by interfering with the binding of activin to its type II receptor. Besides canonical SMAD signaling, can activate non-canonical pathways such as p38 mitogen-activated protein kinases/MAPKs. May promote the expression of HAMP, potentially via its interaction with BMP6. This chain is Activin receptor type-1 (Acvr1), found in Rattus norvegicus (Rat).